Here is a 132-residue protein sequence, read N- to C-terminus: Amicyanin (132 aa).

Positions Met-1–Ala-26 are cleaved as a signal peptide. Position 27 is a pyrrolidone carboxylic acid (Gln-27). A Plastocyanin-like domain is found at Gln-27–Glu-132. Cu cation contacts are provided by His-80, Cys-119, His-122, and Met-125.

Cu cation is required as a cofactor.

The protein resides in the periplasm. Its pathway is one-carbon metabolism; methylamine degradation. Its function is as follows. Primary acceptor of electrons from methylamine dehydrogenase. Passes those electrons on either a soluble cytochrome c or to pseudoazurin. This is Amicyanin (mauC) from Paracoccus versutus (Thiobacillus versutus).